The chain runs to 489 residues: Tripartite motif-containing protein 10 (489 aa).

The segment at 16 to 61 (CPVCQGTLREPVTIDCGHNFCRVCLTRYLEITSPDPEEPPTCPLCK) adopts an RING-type zinc-finger fold. The B box-type zinc finger occupies 94–135 (DEEDVCPEHGEKVYFFCEDDEMQLCVVCREAWEHRAHTVRFL). Positions 99, 102, 121, and 127 each coordinate Zn(2+). Residues 142–245 (YREQIQKCLE…IEELEEKKER (104 aa)) adopt a coiled-coil conformation. The 195-residue stretch at 292–486 (REMKMFLEKL…FSLSSQEGAA (195 aa)) folds into the B30.2/SPRY domain.

It belongs to the TRIM/RBCC family. In terms of assembly, interacts with IFNAR1; this interaction prevents association of IFNAR1 with TYK2.

It is found in the cytoplasm. E3 ligase that plays an essential role in the differentiation and survival of terminal erythroid cells. May directly bind to PTEN and promote its ubiquitination, resulting in its proteasomal degradation and activation of hypertrophic signaling. In addition, plays a role in immune response regulation by repressing the phosphorylation of STAT1 and STAT2 in the interferon/JAK/STAT signaling pathway independent of its E3 ligase activity. Mechanistically, interacts with the intracellular domain of IFNAR1 and thereby inhibits the association between TYK2 and IFNAR1. The chain is Tripartite motif-containing protein 10 (TRIM10) from Bos taurus (Bovine).